The sequence spans 342 residues: N-acetyl-gamma-glutamyl-phosphate reductase (342 aa).

Cys147 is an active-site residue.

This sequence belongs to the NAGSA dehydrogenase family. Type 1 subfamily.

It is found in the cytoplasm. The enzyme catalyses N-acetyl-L-glutamate 5-semialdehyde + phosphate + NADP(+) = N-acetyl-L-glutamyl 5-phosphate + NADPH + H(+). It functions in the pathway amino-acid biosynthesis; L-arginine biosynthesis; N(2)-acetyl-L-ornithine from L-glutamate: step 3/4. In terms of biological role, catalyzes the NADPH-dependent reduction of N-acetyl-5-glutamyl phosphate to yield N-acetyl-L-glutamate 5-semialdehyde. This Campylobacter jejuni subsp. doylei (strain ATCC BAA-1458 / RM4099 / 269.97) protein is N-acetyl-gamma-glutamyl-phosphate reductase.